We begin with the raw amino-acid sequence, 283 residues long: Tropomyosin (283 aa).

Positions 1–283 (MDAIKKKMQA…LDSAFVELIL (283 aa)) form a coiled coil.

The protein belongs to the tropomyosin family. Homodimer.

Tropomyosin, in association with the troponin complex, plays a central role in the calcium dependent regulation of muscle contraction. The polypeptide is Tropomyosin (Locusta migratoria (Migratory locust)).